We begin with the raw amino-acid sequence, 674 residues long: Sodium/myo-inositol cotransporter 2 (674 aa).

The Extracellular portion of the chain corresponds to 1-27 (MESSTSSPQPPLSDPLDPFPQRSLEPG). A helical transmembrane segment spans residues 28 to 48 (DIAVLVLYFLFVLAVGLWSTV). The Cytoplasmic portion of the chain corresponds to 49-56 (KTKRDTVK). The chain crosses the membrane as a helical span at residues 57-77 (GYFLAGGDMVWWPVGASLFAS). The Extracellular segment spans residues 78–102 (NVGSGHFVGLAGSGAATGISVAAYE). A helical membrane pass occupies residues 103-123 (FNGMFSVLMLAWIFLPIYIAG). Residues 124-140 (QVTTMPEYLRRRFGGSR) lie on the Cytoplasmic side of the membrane. The chain crosses the membrane as a helical span at residues 141-161 (IAITLAVLYLFIYIFTKISVD). Residues 162 to 180 (MYAGAIFIQQSLHLDLYLS) are Extracellular-facing. A helical transmembrane segment spans residues 181 to 201 (VVGLLAVTALYTVAGGLAAVI). Residues 202–208 (YTDALQT) lie on the Cytoplasmic side of the membrane. A helical transmembrane segment spans residues 209–229 (LIMLVGALTLMGYSFAAVGGM). Residues 230-272 (EGLQEKYFLALPSNRSENSSCGLPREDAFHLFRDPLTSDLPWP) lie on the Extracellular side of the membrane. The chain crosses the membrane as a helical span at residues 273–293 (GILFGMSIPSLWYWCTDQVIV). Residues 294–308 (QRSLAAKNLSHAKGG) are Cytoplasmic-facing. A helical membrane pass occupies residues 309 to 329 (SLMAAYLKVLPLFIMVFPGMV). Residues 330–375 (SRILFPDQVACADPETCQRVCNNPSGCSDIAYPKLVLELLPTGLRG) are Extracellular-facing. Residues 376 to 396 (LMMAVMVAALMSSLTSIFNSA) form a helical membrane-spanning segment. The Cytoplasmic segment spans residues 397-418 (STIFTMDLWNHVRPRASEKELM). The chain crosses the membrane as a helical span at residues 419–439 (IVGRVFVLLLVLVSVLWIPVV). The Extracellular segment spans residues 440–446 (QASQGGQ). The chain crosses the membrane as a helical span at residues 447–467 (LFVYIQAISSYLQPPVAMVFV). Topologically, residues 468–479 (LGCFWKRANEKG) are cytoplasmic. A helical transmembrane segment spans residues 480-500 (AFWGLVLGLLLGFIRLILDFI). Residues 501 to 521 (YVEPACHQPDERPSVVKNVHY) are Extracellular-facing. The helical transmembrane segment at 522–542 (LYFSMILSSVTVLTVTVMSLL) threads the bilayer. Residues 543 to 653 (TEPPSKEMIS…SIEENPVVKT (111 aa)) are Cytoplasmic-facing. Residues 654–674 (LLDVNCLLCICCAFFLWGYFA) form a helical membrane-spanning segment.

The protein belongs to the sodium:solute symporter (SSF) (TC 2.A.21) family. As to expression, expressed in brain, lung and kidney. In the kidney, strongly expressed in the cortex, at the luminal side of proximal convoluted tubules and in BBMVs. Weaker expression observed in the medulla (at protein level).

The protein resides in the membrane. It is found in the apical cell membrane. The enzyme catalyses myo-inositol(out) + 2 Na(+)(out) = myo-inositol(in) + 2 Na(+)(in). It carries out the reaction 1D-chiro-inositol(out) + 2 Na(+)(out) = 1D-chiro-inositol(in) + 2 Na(+)(in). The catalysed reaction is D-glucose(out) + 2 Na(+)(out) = D-glucose(in) + 2 Na(+)(in). It catalyses the reaction D-xylose(out) + 2 Na(+)(out) = D-xylose(in) + 2 Na(+)(in). With respect to regulation, MI transport activity stimulated five-fold under 24 hour hypertonic shock conditions. MI inward currents were gradually inhibited as increasing amounts of phlorizin were added to the superfusion medium. When sodium is replaced by potassium, MI uptake is dramatically reduced and in the presence of L-fucose or D-chiro-inositol (DCI), the specific accumulation of tracer amounts of MI is also reduced. Its function is as follows. Involved in the sodium-dependent cotransport of myo-inositol (MI) with a Na(+):MI stoichiometry of 2:1. Exclusively responsible for apical MI transport and absorption in intestine. Can also transport D-chiro-inositol (DCI) but not L-fucose. Exhibits stereospecific cotransport of both D-glucose and D-xylose. May induce apoptosis through the TNF-alpha, PDCD1 pathway. May play a role in the regulation of MI concentration in serum, involving reabsorption in at least the proximal tubule of the kidney. The polypeptide is Sodium/myo-inositol cotransporter 2 (Oryctolagus cuniculus (Rabbit)).